Consider the following 399-residue polypeptide: Acetate kinase (399 aa).

Asn10 is a binding site for Mg(2+). Lys17 contacts ATP. Arg91 provides a ligand contact to substrate. Asp148 functions as the Proton donor/acceptor in the catalytic mechanism. ATP-binding positions include 208-212, 283-285, and 331-335; these read HLGNG, DCR, and GIGEN. Glu385 contacts Mg(2+).

It belongs to the acetokinase family. Homodimer. Mg(2+) serves as cofactor. Mn(2+) is required as a cofactor.

Its subcellular location is the cytoplasm. It catalyses the reaction acetate + ATP = acetyl phosphate + ADP. It functions in the pathway metabolic intermediate biosynthesis; acetyl-CoA biosynthesis; acetyl-CoA from acetate: step 1/2. Its function is as follows. Catalyzes the formation of acetyl phosphate from acetate and ATP. Can also catalyze the reverse reaction. The polypeptide is Acetate kinase (Shewanella baltica (strain OS223)).